The sequence spans 193 residues: MLSHKTQHKSIYTREKSYKCKKCGKTFNWSSILTNNKKIHTEQKPYKCEECGKAFKQHSTLTTHKIICAEEKLYRCEECGKAFCQPSTLTRYKRMHRRKKLYKCEECGKAFTQFSTLTKHKRIHTRGKHYKCEESGKAFIWSSGLTEHRRVHTRQKPYKCEECGKALIQFSTLTRHKRIHTGEKPNKSMWQTF.

Residues 18 to 40 form a C2H2-type 1; degenerate zinc finger; that stretch reads YKCKKCGKTFNWSSILTNNKKIH. Residues 46–68 form a C2H2-type 2; atypical zinc finger; it reads YKCEECGKAFKQHSTLTTHKIIC. The C2H2-type 3; degenerate zinc-finger motif lies at 74–96; it reads YRCEECGKAFCQPSTLTRYKRMH. A C2H2-type 4 zinc finger spans residues 102–124; that stretch reads YKCEECGKAFTQFSTLTKHKRIH. The C2H2-type 5; degenerate zinc finger occupies 130 to 152; it reads YKCEESGKAFIWSSGLTEHRRVH. Residues 158–180 form a C2H2-type 6 zinc finger; it reads YKCEECGKALIQFSTLTRHKRIH.

The sequence is that of Putative zinc finger protein 726P1 (ZNF726P1) from Homo sapiens (Human).